A 161-amino-acid chain; its full sequence is Type II secretion system protein M (161 aa).

The Cytoplasmic portion of the chain corresponds to 1–16 (MHNLLALWQQRTRRER). Residues 17–36 (CLLLGMAVVLLIGLVYYTLW) form a helical membrane-spanning segment. The Periplasmic portion of the chain corresponds to 37-161 (QPWQNREAQW…TLVLERSDEK (125 aa)).

The protein belongs to the GSP M family. Type II secretion system is composed of four main components: the outer membrane complex, the inner membrane complex, the cytoplasmic secretion ATPase and the periplasm-spanning pseudopilus. Forms homodimers. Interacts with PulL/GspL. Interacts with PulE/GspE and PulF/GspF.

Its subcellular location is the cell inner membrane. In terms of biological role, inner membrane component of the type II secretion system required for the energy-dependent secretion of extracellular factors such as proteases and toxins from the periplasm. Plays a role in the complex assembly and recruits PulL resulting in a stable complex in the inner membrane. Provides thus a link between the energy-providing PulE protein in the cytoplasm and the rest of the T2SS machinery. The protein is Type II secretion system protein M (pulM) of Klebsiella pneumoniae.